The chain runs to 278 residues: Indole-3-glycerol phosphate synthase (278 aa).

This sequence belongs to the TrpC family.

It carries out the reaction 1-(2-carboxyphenylamino)-1-deoxy-D-ribulose 5-phosphate + H(+) = (1S,2R)-1-C-(indol-3-yl)glycerol 3-phosphate + CO2 + H2O. It functions in the pathway amino-acid biosynthesis; L-tryptophan biosynthesis; L-tryptophan from chorismate: step 4/5. The chain is Indole-3-glycerol phosphate synthase from Pseudomonas fluorescens (strain SBW25).